We begin with the raw amino-acid sequence, 376 residues long: Queuine tRNA-ribosyltransferase (376 aa).

The Proton acceptor role is filled by Asp93. Substrate is bound by residues 93-97 (DSGGF), Asp147, Gln190, and Gly217. Residues 248 to 254 (GVGKPDD) are RNA binding. The Nucleophile role is filled by Asp267. Zn(2+) is bound by residues Cys305, Cys307, Cys310, and His336.

The protein belongs to the queuine tRNA-ribosyltransferase family. In terms of assembly, homodimer. Within each dimer, one monomer is responsible for RNA recognition and catalysis, while the other monomer binds to the replacement base PreQ1. The cofactor is Zn(2+).

The catalysed reaction is 7-aminomethyl-7-carbaguanine + guanosine(34) in tRNA = 7-aminomethyl-7-carbaguanosine(34) in tRNA + guanine. It functions in the pathway tRNA modification; tRNA-queuosine biosynthesis. Its function is as follows. Catalyzes the base-exchange of a guanine (G) residue with the queuine precursor 7-aminomethyl-7-deazaguanine (PreQ1) at position 34 (anticodon wobble position) in tRNAs with GU(N) anticodons (tRNA-Asp, -Asn, -His and -Tyr). Catalysis occurs through a double-displacement mechanism. The nucleophile active site attacks the C1' of nucleotide 34 to detach the guanine base from the RNA, forming a covalent enzyme-RNA intermediate. The proton acceptor active site deprotonates the incoming PreQ1, allowing a nucleophilic attack on the C1' of the ribose to form the product. After dissociation, two additional enzymatic reactions on the tRNA convert PreQ1 to queuine (Q), resulting in the hypermodified nucleoside queuosine (7-(((4,5-cis-dihydroxy-2-cyclopenten-1-yl)amino)methyl)-7-deazaguanosine). The sequence is that of Queuine tRNA-ribosyltransferase from Cereibacter sphaeroides (strain ATCC 17029 / ATH 2.4.9) (Rhodobacter sphaeroides).